Reading from the N-terminus, the 412-residue chain is Putative competence-damage inducible protein (412 aa).

Belongs to the CinA family.

This Clostridium perfringens (strain 13 / Type A) protein is Putative competence-damage inducible protein.